Reading from the N-terminus, the 314-residue chain is D-alanine--D-alanine ligase (314 aa).

The ATP-grasp domain maps to 112 to 307; it reads KQVWQSLGLP…FQQLVLSILD (196 aa). 138–193 is a binding site for ATP; sequence AQMLGFPLIVKPAHEGSSIGMAKVGDVAELIAAWRAASAYDAQVLVEQWIQGPEFT. Positions 261, 274, and 276 each coordinate Mg(2+).

It belongs to the D-alanine--D-alanine ligase family. Mg(2+) serves as cofactor. The cofactor is Mn(2+).

The protein resides in the cytoplasm. It catalyses the reaction 2 D-alanine + ATP = D-alanyl-D-alanine + ADP + phosphate + H(+). The protein operates within cell wall biogenesis; peptidoglycan biosynthesis. Cell wall formation. The protein is D-alanine--D-alanine ligase of Stutzerimonas stutzeri (strain A1501) (Pseudomonas stutzeri).